A 248-amino-acid polypeptide reads, in one-letter code: 1-(5-phosphoribosyl)-5-[(5-phosphoribosylamino)methylideneamino] imidazole-4-carboxamide isomerase (248 aa).

The active-site Proton acceptor is the Asp8. Asp129 functions as the Proton donor in the catalytic mechanism.

The protein belongs to the HisA/HisF family.

The protein resides in the cytoplasm. It catalyses the reaction 1-(5-phospho-beta-D-ribosyl)-5-[(5-phospho-beta-D-ribosylamino)methylideneamino]imidazole-4-carboxamide = 5-[(5-phospho-1-deoxy-D-ribulos-1-ylimino)methylamino]-1-(5-phospho-beta-D-ribosyl)imidazole-4-carboxamide. It participates in amino-acid biosynthesis; L-histidine biosynthesis; L-histidine from 5-phospho-alpha-D-ribose 1-diphosphate: step 4/9. The protein is 1-(5-phosphoribosyl)-5-[(5-phosphoribosylamino)methylideneamino] imidazole-4-carboxamide isomerase of Rhizobium leguminosarum bv. trifolii (strain WSM2304).